A 329-amino-acid chain; its full sequence is GTPase Obg (329 aa).

Positions 1–159 constitute an Obg domain; sequence MQFIDQAIID…WSLQLELKLL (159 aa). Residues 160–328 enclose the OBG-type G domain; it reads AEVGIIGLPN…LLSSIWYELG (169 aa). Residues 166–173, 191–195, 213–216, 280–283, and 309–311 contribute to the ATP site; these read GLPNAGKS, FTTLI, DIPG, NKKE, and SAV. Residues serine 173 and threonine 193 each coordinate Mg(2+).

It belongs to the TRAFAC class OBG-HflX-like GTPase superfamily. OBG GTPase family. Monomer. Requires Mg(2+) as cofactor.

The protein resides in the cytoplasm. In terms of biological role, an essential GTPase which binds GTP, GDP and possibly (p)ppGpp with moderate affinity, with high nucleotide exchange rates and a fairly low GTP hydrolysis rate. Plays a role in control of the cell cycle, stress response, ribosome biogenesis and in those bacteria that undergo differentiation, in morphogenesis control. In Prochlorococcus marinus (strain NATL1A), this protein is GTPase Obg.